Consider the following 173-residue polypeptide: Alpha-crystallin A chain (173 aa).

Methionine 1 carries the N-acetylmethionine modification. The tract at residues 1–63 (MDIAIQHPWF…RTVLDSGISE (63 aa)) is required for complex formation with BFSP1 and BFSP2. A Deamidated glutamine; partial modification is found at glutamine 6. Residue lysine 11 is glycosylated (N-linked (Glc) (glycation) lysine). Serine 45 carries the post-translational modification Phosphoserine. Glutamine 50 carries the post-translational modification Deamidated glutamine; partial. Residues 52 to 162 (LFRTVLDSGI…GHSERAIPVS (111 aa)) form the sHSP domain. The residue at position 70 (lysine 70) is an N6-acetyllysine. Lysine 78 carries an N-linked (Glc) (glycation) lysine glycan. Glutamine 90 carries the deamidated glutamine; partial modification. Lysine 99 carries the N6-acetyllysine modification. Residue histidine 100 coordinates Zn(2+). Asparagine 101 is subject to Deamidated asparagine; partial. Positions 102 and 107 each coordinate Zn(2+). Serine 122 is modified (phosphoserine). Asparagine 123 bears the Deamidated asparagine; partial mark. The disordered stretch occupies residues 144–173 (PKIPSGVDAGHSERAIPVSREEKPSSAPSS). Residues 153 to 167 (GHSERAIPVSREEKP) show a composition bias toward basic and acidic residues. Position 154 (histidine 154) interacts with Zn(2+). The tract at residues 157–163 (RAIPVSR) is important for oligomerization. Serine 162 is a glycosylation site (O-linked (GlcNAc) serine).

The protein belongs to the small heat shock protein (HSP20) family. In terms of assembly, heteromer composed of three CRYAA and one CRYAB subunits. Inter-subunit bridging via zinc ions enhances stability, which is crucial as there is no protein turn over in the lens. Can also form homodimers and homotetramers (dimers of dimers) which serve as the building blocks of homooligomers. Within homooligomers, the zinc-binding motif is created from residues of 3 different molecules. His-100 and Glu-102 from one molecule are ligands of the zinc ion, and His-107 and His-154 residues from additional molecules complete the site with tetrahedral coordination geometry. Part of a complex required for lens intermediate filament formation composed of BFSP1, BFSP2 and CRYAA. Post-translationally, acetylation at Lys-70 may increase chaperone activity. Undergoes age-dependent proteolytical cleavage at the C-terminus.

Its subcellular location is the cytoplasm. The protein localises to the nucleus. Contributes to the transparency and refractive index of the lens. Acts as a chaperone, preventing aggregation of various proteins under a wide range of stress conditions. Required for the correct formation of lens intermediate filaments as part of a complex composed of BFSP1, BFSP2 and CRYAA. The chain is Alpha-crystallin A chain (CRYAA) from Bos taurus (Bovine).